Here is a 175-residue protein sequence, read N- to C-terminus: Hypoxanthine-guanine phosphoribosyltransferase (175 aa).

2 residues coordinate diphosphate: Lys-40 and Gly-41. Residues Glu-96 and Asp-97 each contribute to the Mg(2+) site. The active-site Proton acceptor is the Asp-100. Residues Lys-128, 149–150 (FL), and Asp-156 each bind GMP. Arg-162 is a binding site for diphosphate.

This sequence belongs to the purine/pyrimidine phosphoribosyltransferase family. It depends on Mg(2+) as a cofactor.

The protein resides in the cytoplasm. It carries out the reaction IMP + diphosphate = hypoxanthine + 5-phospho-alpha-D-ribose 1-diphosphate. The enzyme catalyses GMP + diphosphate = guanine + 5-phospho-alpha-D-ribose 1-diphosphate. The protein operates within purine metabolism; IMP biosynthesis via salvage pathway; IMP from hypoxanthine: step 1/1. It participates in purine metabolism; GMP biosynthesis via salvage pathway; GMP from guanine: step 1/1. In terms of biological role, purine salvage pathway enzyme that catalyzes the transfer of the ribosyl-5-phosphate group from 5-phospho-alpha-D-ribose 1-diphosphate (PRPP) to the N9 position of the 6-oxopurines hypoxanthine and guanine to form the corresponding ribonucleotides IMP (inosine 5'-monophosphate) and GMP (guanosine 5'-monophosphate), with the release of PPi. The chain is Hypoxanthine-guanine phosphoribosyltransferase (hpt) from Mycoplasma pneumoniae (strain ATCC 29342 / M129 / Subtype 1) (Mycoplasmoides pneumoniae).